We begin with the raw amino-acid sequence, 215 residues long: Probable phosphoglycerate mutase GpmB (215 aa).

Substrate-binding positions include 8-15 (RHGETQWN), 21-22 (QG), arginine 58, lysine 60, 82-85 (ELDM), 104-105 (RR), and 151-152 (GI). Histidine 9 acts as the Tele-phosphohistidine intermediate in catalysis. Glutamate 82 (proton donor/acceptor) is an active-site residue.

Belongs to the phosphoglycerate mutase family. GpmB subfamily.

The catalysed reaction is (2R)-2-phosphoglycerate = (2R)-3-phosphoglycerate. It participates in carbohydrate degradation; glycolysis; pyruvate from D-glyceraldehyde 3-phosphate: step 3/5. This chain is Probable phosphoglycerate mutase GpmB, found in Salmonella typhi.